Consider the following 59-residue polypeptide: Large ribosomal subunit protein bL32 (59 aa).

Positions 1–15 (MANPKRKQSKRRSAN) are enriched in basic residues. The disordered stretch occupies residues 1 to 48 (MANPKRKQSKRRSANRRAANAFIAPEFAKDPTDGSAFRPHRVNPKNGM).

This sequence belongs to the bacterial ribosomal protein bL32 family.

This chain is Large ribosomal subunit protein bL32, found in Opitutus terrae (strain DSM 11246 / JCM 15787 / PB90-1).